We begin with the raw amino-acid sequence, 173 residues long: PTS system glucose-specific EIIA component (173 aa).

The PTS EIIA type-1 domain occupies 40–144 (DPTFAQKMMG…STVTPVVVTN (105 aa)). 2 residues coordinate Zn(2+): histidine 77 and histidine 92. Histidine 92 functions as the Tele-phosphohistidine intermediate; for EIIA activity in the catalytic mechanism. Phosphohistidine; by HPr is present on histidine 92.

In terms of assembly, heterodimer with glycerol kinase (glpk). It depends on Zn(2+) as a cofactor.

Its subcellular location is the cytoplasm. The phosphoenolpyruvate-dependent sugar phosphotransferase system (sugar PTS), a major carbohydrate active transport system, catalyzes the phosphorylation of incoming sugar substrates concomitantly with their translocation across the cell membrane. The enzyme II complex composed of PtsG and Crr is involved in glucose transport. This Halalkalibacterium halodurans (strain ATCC BAA-125 / DSM 18197 / FERM 7344 / JCM 9153 / C-125) (Bacillus halodurans) protein is PTS system glucose-specific EIIA component (crr).